Reading from the N-terminus, the 169-residue chain is Lipoprotein signal peptidase (169 aa).

Transmembrane regions (helical) follow at residues 56-76 (FLPP…VIIY) and 84-104 (QPLF…NLID). Active-site residues include Asp113 and Asp139. Residues 132–152 (WPIFNIADSAITIGACMLIIF) traverse the membrane as a helical segment.

It belongs to the peptidase A8 family.

The protein resides in the cell inner membrane. The catalysed reaction is Release of signal peptides from bacterial membrane prolipoproteins. Hydrolyzes -Xaa-Yaa-Zaa-|-(S,diacylglyceryl)Cys-, in which Xaa is hydrophobic (preferably Leu), and Yaa (Ala or Ser) and Zaa (Gly or Ala) have small, neutral side chains.. The protein operates within protein modification; lipoprotein biosynthesis (signal peptide cleavage). Its function is as follows. This protein specifically catalyzes the removal of signal peptides from prolipoproteins. The sequence is that of Lipoprotein signal peptidase from Chlorobium phaeovibrioides (strain DSM 265 / 1930) (Prosthecochloris vibrioformis (strain DSM 265)).